The sequence spans 826 residues: Ribonucleoside-diphosphate reductase large subunit (826 aa).

Substrate is bound by residues threonine 171, 186–187, glycine 217, 387–391, and 594–598; these read SC, NLCAE, and PTSGC. A disulfide bond links cysteine 187 and cysteine 403. Asparagine 387 acts as the Proton acceptor in catalysis. The active-site Cysteine radical intermediate is cysteine 389. Glutamate 391 functions as the Proton acceptor in the catalytic mechanism. Residues 747 to 769 are disordered; the sequence is SVPREEQNERSPAEQMPPRPMEP. Residues 749 to 758 show a composition bias toward basic and acidic residues; it reads PREEQNERSP.

This sequence belongs to the ribonucleoside diphosphate reductase large chain family. Heterotetramer composed of a homodimer of the large subunit (R1) and a homodimer of the small subunit (R2). Larger multisubunit protein complex are also active, composed of (R1)n(R2)n.

It catalyses the reaction a 2'-deoxyribonucleoside 5'-diphosphate + [thioredoxin]-disulfide + H2O = a ribonucleoside 5'-diphosphate + [thioredoxin]-dithiol. Ribonucleoside-diphosphate reductase holoenzyme provides the precursors necessary for viral DNA synthesis. Allows virus growth in non-dividing cells, as well as reactivation from latency in infected hosts. Catalyzes the biosynthesis of deoxyribonucleotides from the corresponding ribonucleotides. The polypeptide is Ribonucleoside-diphosphate reductase large subunit (Homo sapiens (Human)).